A 179-amino-acid chain; its full sequence is Large ribosomal subunit protein uL5 (179 aa).

The protein belongs to the universal ribosomal protein uL5 family. Part of the 50S ribosomal subunit; part of the 5S rRNA/L5/L18/L25 subcomplex. Contacts the 5S rRNA and the P site tRNA. Forms a bridge to the 30S subunit in the 70S ribosome.

This is one of the proteins that bind and probably mediate the attachment of the 5S RNA into the large ribosomal subunit, where it forms part of the central protuberance. In the 70S ribosome it contacts protein S13 of the 30S subunit (bridge B1b), connecting the 2 subunits; this bridge is implicated in subunit movement. Contacts the P site tRNA; the 5S rRNA and some of its associated proteins might help stabilize positioning of ribosome-bound tRNAs. This Desulforapulum autotrophicum (strain ATCC 43914 / DSM 3382 / VKM B-1955 / HRM2) (Desulfobacterium autotrophicum) protein is Large ribosomal subunit protein uL5.